Here is a 622-residue protein sequence, read N- to C-terminus: Chaperone protein HscA homolog (622 aa).

This sequence belongs to the heat shock protein 70 family.

Functionally, chaperone involved in the maturation of iron-sulfur cluster-containing proteins. Has a low intrinsic ATPase activity which is markedly stimulated by HscB. This chain is Chaperone protein HscA homolog, found in Burkholderia pseudomallei (strain K96243).